Reading from the N-terminus, the 637-residue chain is Probable serine/threonine-protein kinase DDB_G0283065 (637 aa).

2 disordered regions span residues 36 to 88 (NNNN…KFNR) and 155 to 234 (NSNN…RFNN). Positions 53-85 (NNSTTKSIDNNNNNTNNSNSNNNNNDNIKNNNK) are enriched in low complexity. Residues 236-629 (FNDVRVLGKG…NQISTDYDNF (394 aa)) enclose the Protein kinase domain. ATP is bound by residues 242–250 (LGKGGFGIV) and Lys265. The active-site Proton acceptor is Asp479.

Belongs to the protein kinase superfamily. Ser/Thr protein kinase family. GCN2 subfamily.

The catalysed reaction is L-seryl-[protein] + ATP = O-phospho-L-seryl-[protein] + ADP + H(+). The enzyme catalyses L-threonyl-[protein] + ATP = O-phospho-L-threonyl-[protein] + ADP + H(+). This Dictyostelium discoideum (Social amoeba) protein is Probable serine/threonine-protein kinase DDB_G0283065.